The primary structure comprises 338 residues: DNA-directed RNA polymerase subunit alpha (338 aa).

Residues 1–226 are alpha N-terminal domain (alpha-NTD); the sequence is MLIAQRPTLT…ELFGLARELN (226 aa). An alpha C-terminal domain (alpha-CTD) region spans residues 243–338; it reads LAADLALPIE…DADYADEQYN (96 aa).

This sequence belongs to the RNA polymerase alpha chain family. As to quaternary structure, homodimer. The RNAP catalytic core consists of 2 alpha, 1 beta, 1 beta' and 1 omega subunit. When a sigma factor is associated with the core the holoenzyme is formed, which can initiate transcription.

It carries out the reaction RNA(n) + a ribonucleoside 5'-triphosphate = RNA(n+1) + diphosphate. Functionally, DNA-dependent RNA polymerase catalyzes the transcription of DNA into RNA using the four ribonucleoside triphosphates as substrates. This Beutenbergia cavernae (strain ATCC BAA-8 / DSM 12333 / CCUG 43141 / JCM 11478 / NBRC 16432 / NCIMB 13614 / HKI 0122) protein is DNA-directed RNA polymerase subunit alpha.